Consider the following 212-residue polypeptide: Pyridoxine/pyridoxamine 5'-phosphate oxidase (212 aa).

Substrate-binding positions include 8–11 (RREY) and Lys-66. Residues 61–66 (RIVLLK), 76–77 (FT), Arg-82, Lys-83, and Gln-105 contribute to the FMN site. Tyr-123, Arg-127, and Ser-131 together coordinate substrate. FMN is bound by residues 140 to 141 (QS) and Trp-185. Residue 191-193 (RLH) participates in substrate binding. Arg-195 provides a ligand contact to FMN.

Belongs to the pyridoxamine 5'-phosphate oxidase family. As to quaternary structure, homodimer. FMN is required as a cofactor.

The catalysed reaction is pyridoxamine 5'-phosphate + O2 + H2O = pyridoxal 5'-phosphate + H2O2 + NH4(+). It catalyses the reaction pyridoxine 5'-phosphate + O2 = pyridoxal 5'-phosphate + H2O2. The protein operates within cofactor metabolism; pyridoxal 5'-phosphate salvage; pyridoxal 5'-phosphate from pyridoxamine 5'-phosphate: step 1/1. It participates in cofactor metabolism; pyridoxal 5'-phosphate salvage; pyridoxal 5'-phosphate from pyridoxine 5'-phosphate: step 1/1. Its function is as follows. Catalyzes the oxidation of either pyridoxine 5'-phosphate (PNP) or pyridoxamine 5'-phosphate (PMP) into pyridoxal 5'-phosphate (PLP). The protein is Pyridoxine/pyridoxamine 5'-phosphate oxidase of Shewanella sp. (strain ANA-3).